The primary structure comprises 307 residues: Alpha N-terminal protein methyltransferase 1 (307 aa).

Over residues 38-54 the composition is skewed to low complexity; the sequence is EPAPAPAAGSNGVAGEQ. The interval 38–60 is disordered; sequence EPAPAPAAGSNGVAGEQEAGGGG. Residues glycine 123, arginine 128, 145–147, 179–180, and glutamine 195 each bind S-adenosyl-L-methionine; these read EPV and LQ.

It belongs to the methyltransferase superfamily. NTM1 family.

The enzyme catalyses N-terminal L-alanyl-L-prolyl-L-lysyl-[protein] + 3 S-adenosyl-L-methionine = N-terminal N,N,N-trimethyl-L-alanyl-L-prolyl-L-lysyl-[protein] + 3 S-adenosyl-L-homocysteine + 3 H(+). The catalysed reaction is N-terminal L-seryl-L-prolyl-L-lysyl-[protein] + 3 S-adenosyl-L-methionine = N-terminal N,N,N-trimethyl-L-seryl-L-prolyl-L-lysyl-[protein] + 3 S-adenosyl-L-homocysteine + 3 H(+). It catalyses the reaction N-terminal L-prolyl-L-prolyl-L-lysyl-[protein] + 2 S-adenosyl-L-methionine = N-terminal N,N-dimethyl-L-prolyl-L-prolyl-L-lysyl-[protein] + 2 S-adenosyl-L-homocysteine + 2 H(+). Its function is as follows. Alpha-N-methyltransferase that methylates the N-terminus of target proteins containing the N-terminal motif [Ala/Pro/Ser]-Pro-Lys when the initiator Met is cleaved. Specifically catalyzes mono-, di- or tri-methylation of exposed alpha-amino group of Ala or Ser residue in the [Ala/Ser]-Pro-Lys motif and mono- or di-methylation of Pro in the Pro-Pro-Lys motif. The sequence is that of Alpha N-terminal protein methyltransferase 1 from Oryza sativa subsp. indica (Rice).